The sequence spans 204 residues: Ribosomal RNA small subunit methyltransferase G (204 aa).

Residues Gly73, Phe78, and Arg139 each coordinate S-adenosyl-L-methionine.

Belongs to the methyltransferase superfamily. RNA methyltransferase RsmG family.

The protein resides in the cytoplasm. The enzyme catalyses guanosine(527) in 16S rRNA + S-adenosyl-L-methionine = N(7)-methylguanosine(527) in 16S rRNA + S-adenosyl-L-homocysteine. Specifically methylates the N7 position of guanine in position 527 of 16S rRNA. This is Ribosomal RNA small subunit methyltransferase G from Coxiella burnetii (strain CbuG_Q212) (Coxiella burnetii (strain Q212)).